The sequence spans 3649 residues: N-(5-amino-5-carboxypentanoyl)-L-cysteinyl-D-valine synthase (3649 aa).

A domain 1 (adipate-activating) region spans residues 401–861; that stretch reads SRDRAYVTYT…LAGHLESQGH (461 aa). 3 consecutive Carrier domains span residues 783-860, 1859-1936, and 2909-2984; these read APLL…ESQG, APVS…QAAA, and APRD…LSGL. O-(pantetheine 4'-phosphoryl)serine occurs at positions 820, 1896, and 2944. Residues 1014 to 1937 form a domain 2 (cysteine-activating) region; it reads HHIILDGWSL…QAEHIQAAAL (924 aa). The interval 2079–2985 is domain 3 (valine-activating); it reads HHSCFDGWSW…FVDNVLSGLA (907 aa). Ser3502 functions as the For thioesterase activity in the catalytic mechanism.

Belongs to the ATP-dependent AMP-binding enzyme family. Requires pantetheine 4'-phosphate as cofactor.

The enzyme catalyses L-2-aminoadipate + L-valine + L-cysteine + 3 ATP + H2O = N-[(5S)-5-amino-5-carboxypentanoyl]-L-cysteinyl-D-valine + 3 AMP + 3 diphosphate + 3 H(+). It functions in the pathway antibiotic biosynthesis; penicillin G biosynthesis; penicillin G from L-alpha-aminoadipate and L-cysteine and L-valine: step 1/3. Each of the constituent amino acids of the tripeptide acv are activated as aminoacyl-adenylates with peptide bonds formed through the participation of amino acid thioester intermediates. This is N-(5-amino-5-carboxypentanoyl)-L-cysteinyl-D-valine synthase (pcbAB) from Amycolatopsis lactamdurans (Nocardia lactamdurans).